The following is a 114-amino-acid chain: NAD(P)H-quinone oxidoreductase subunit M (114 aa).

It belongs to the complex I NdhM subunit family. NDH-1 can be composed of about 15 different subunits; different subcomplexes with different compositions have been identified which probably have different functions.

Its subcellular location is the cellular thylakoid membrane. It catalyses the reaction a plastoquinone + NADH + (n+1) H(+)(in) = a plastoquinol + NAD(+) + n H(+)(out). The catalysed reaction is a plastoquinone + NADPH + (n+1) H(+)(in) = a plastoquinol + NADP(+) + n H(+)(out). In terms of biological role, NDH-1 shuttles electrons from an unknown electron donor, via FMN and iron-sulfur (Fe-S) centers, to quinones in the respiratory and/or the photosynthetic chain. The immediate electron acceptor for the enzyme in this species is believed to be plastoquinone. Couples the redox reaction to proton translocation, and thus conserves the redox energy in a proton gradient. Cyanobacterial NDH-1 also plays a role in inorganic carbon-concentration. The protein is NAD(P)H-quinone oxidoreductase subunit M of Acaryochloris marina (strain MBIC 11017).